A 283-amino-acid polypeptide reads, in one-letter code: Elongation factor Ts (283 aa).

The tract at residues 80–83 (TDFV) is involved in Mg(2+) ion dislocation from EF-Tu.

Belongs to the EF-Ts family.

The protein resides in the cytoplasm. Functionally, associates with the EF-Tu.GDP complex and induces the exchange of GDP to GTP. It remains bound to the aminoacyl-tRNA.EF-Tu.GTP complex up to the GTP hydrolysis stage on the ribosome. This Haemophilus influenzae (strain PittEE) protein is Elongation factor Ts.